Here is a 156-residue protein sequence, read N- to C-terminus: SsrA-binding protein (156 aa).

It belongs to the SmpB family.

Its subcellular location is the cytoplasm. In terms of biological role, required for rescue of stalled ribosomes mediated by trans-translation. Binds to transfer-messenger RNA (tmRNA), required for stable association of tmRNA with ribosomes. tmRNA and SmpB together mimic tRNA shape, replacing the anticodon stem-loop with SmpB. tmRNA is encoded by the ssrA gene; the 2 termini fold to resemble tRNA(Ala) and it encodes a 'tag peptide', a short internal open reading frame. During trans-translation Ala-aminoacylated tmRNA acts like a tRNA, entering the A-site of stalled ribosomes, displacing the stalled mRNA. The ribosome then switches to translate the ORF on the tmRNA; the nascent peptide is terminated with the 'tag peptide' encoded by the tmRNA and targeted for degradation. The ribosome is freed to recommence translation, which seems to be the essential function of trans-translation. The polypeptide is SsrA-binding protein (Clostridium botulinum (strain Alaska E43 / Type E3)).